Here is a 695-residue protein sequence, read N- to C-terminus: Phosphate acetyltransferase (695 aa).

Residues Phe374 to Arg695 form a phosphate acetyltransferase region.

It in the N-terminal section; belongs to the CobB/CobQ family. This sequence in the C-terminal section; belongs to the phosphate acetyltransferase and butyryltransferase family. Homohexamer.

The protein localises to the cytoplasm. It catalyses the reaction acetyl-CoA + phosphate = acetyl phosphate + CoA. It functions in the pathway metabolic intermediate biosynthesis; acetyl-CoA biosynthesis; acetyl-CoA from acetate: step 2/2. Involved in acetate metabolism. The polypeptide is Phosphate acetyltransferase (pta) (Pseudomonas putida (strain ATCC 47054 / DSM 6125 / CFBP 8728 / NCIMB 11950 / KT2440)).